Reading from the N-terminus, the 154-residue chain is SsrA-binding protein (154 aa).

Residues 134–154 (KRQAIKERQTQREIQRELKER) are disordered.

The protein belongs to the SmpB family.

Its subcellular location is the cytoplasm. Its function is as follows. Required for rescue of stalled ribosomes mediated by trans-translation. Binds to transfer-messenger RNA (tmRNA), required for stable association of tmRNA with ribosomes. tmRNA and SmpB together mimic tRNA shape, replacing the anticodon stem-loop with SmpB. tmRNA is encoded by the ssrA gene; the 2 termini fold to resemble tRNA(Ala) and it encodes a 'tag peptide', a short internal open reading frame. During trans-translation Ala-aminoacylated tmRNA acts like a tRNA, entering the A-site of stalled ribosomes, displacing the stalled mRNA. The ribosome then switches to translate the ORF on the tmRNA; the nascent peptide is terminated with the 'tag peptide' encoded by the tmRNA and targeted for degradation. The ribosome is freed to recommence translation, which seems to be the essential function of trans-translation. This Synechococcus sp. (strain JA-2-3B'a(2-13)) (Cyanobacteria bacterium Yellowstone B-Prime) protein is SsrA-binding protein.